The primary structure comprises 430 residues: 3-phosphoshikimate 1-carboxyvinyltransferase (430 aa).

3-phosphoshikimate is bound by residues K20, S21, and R25. K20 is a phosphoenolpyruvate binding site. The phosphoenolpyruvate site is built by G92 and R120. The 3-phosphoshikimate site is built by S166, Q168, D312, and K339. Q168 contributes to the phosphoenolpyruvate binding site. D312 (proton acceptor) is an active-site residue. Phosphoenolpyruvate is bound by residues R343 and R387.

This sequence belongs to the EPSP synthase family. In terms of assembly, monomer.

The protein resides in the cytoplasm. The enzyme catalyses 3-phosphoshikimate + phosphoenolpyruvate = 5-O-(1-carboxyvinyl)-3-phosphoshikimate + phosphate. It functions in the pathway metabolic intermediate biosynthesis; chorismate biosynthesis; chorismate from D-erythrose 4-phosphate and phosphoenolpyruvate: step 6/7. In terms of biological role, catalyzes the transfer of the enolpyruvyl moiety of phosphoenolpyruvate (PEP) to the 5-hydroxyl of shikimate-3-phosphate (S3P) to produce enolpyruvyl shikimate-3-phosphate and inorganic phosphate. The sequence is that of 3-phosphoshikimate 1-carboxyvinyltransferase from Lactococcus lactis subsp. cremoris (strain SK11).